The following is a 281-amino-acid chain: MYIFFPKLNPIIFTIGPVSARWYGFMYVISFLFAMWYGKKCSIKNKKIWYEKKIETLLYSIFLGSCIGGRIGYIIFYNFSYYSQNMLSVFYIWEGGMSFHGGLIGAIIVMSYFSFKYKKKILEISDFITPLIPFGLGAGRIGNFINSELWGRVSPNFSYAMIFPNSQNQDLKEIKKYPELQLLSDQYGALPRHPTQLYEFFLEGILLFFIIYFFSKKDRPTGSISGLFLIFYGLFRIFIEFFREPDPQIGLLKNIITMGQILSLPMIIAGLIIMYKSCYKK.

7 helical membrane-spanning segments follow: residues 11-31, 57-77, 89-109, 121-141, 194-214, 222-242, and 255-275; these read IIFT…VISF, LLYS…IIFY, VFYI…AIIV, ILEI…AGRI, PTQL…IYFF, GSIS…IEFF, and IITM…IIMY. R140 contributes to the a 1,2-diacyl-sn-glycero-3-phospho-(1'-sn-glycerol) binding site.

The protein belongs to the Lgt family.

Its subcellular location is the cell inner membrane. The enzyme catalyses L-cysteinyl-[prolipoprotein] + a 1,2-diacyl-sn-glycero-3-phospho-(1'-sn-glycerol) = an S-1,2-diacyl-sn-glyceryl-L-cysteinyl-[prolipoprotein] + sn-glycerol 1-phosphate + H(+). Its pathway is protein modification; lipoprotein biosynthesis (diacylglyceryl transfer). In terms of biological role, catalyzes the transfer of the diacylglyceryl group from phosphatidylglycerol to the sulfhydryl group of the N-terminal cysteine of a prolipoprotein, the first step in the formation of mature lipoproteins. This chain is Phosphatidylglycerol--prolipoprotein diacylglyceryl transferase, found in Buchnera aphidicola subsp. Acyrthosiphon pisum (strain 5A).